The primary structure comprises 321 residues: GTP 3',8-cyclase (321 aa).

In terms of domain architecture, Radical SAM core spans 5 to 227; the sequence is SYDRVVDYLR…DEGYDGASPS (223 aa). Arg14 provides a ligand contact to GTP. [4Fe-4S] cluster contacts are provided by Cys21 and Cys25. Tyr27 provides a ligand contact to S-adenosyl-L-methionine. Cys28 is a [4Fe-4S] cluster binding site. Arg64 serves as a coordination point for GTP. Gly68 contributes to the S-adenosyl-L-methionine binding site. Thr95 is a binding site for GTP. Ser119 contacts S-adenosyl-L-methionine. Residue Lys155 participates in GTP binding. An S-adenosyl-L-methionine-binding site is contributed by Met189. [4Fe-4S] cluster contacts are provided by Cys249 and Cys252. GTP is bound at residue 254-256; the sequence is RIR. Cys266 lines the [4Fe-4S] cluster pocket.

This sequence belongs to the radical SAM superfamily. MoaA family. Monomer and homodimer. The cofactor is [4Fe-4S] cluster.

The enzyme catalyses GTP + AH2 + S-adenosyl-L-methionine = (8S)-3',8-cyclo-7,8-dihydroguanosine 5'-triphosphate + 5'-deoxyadenosine + L-methionine + A + H(+). Its pathway is cofactor biosynthesis; molybdopterin biosynthesis. Its function is as follows. Catalyzes the cyclization of GTP to (8S)-3',8-cyclo-7,8-dihydroguanosine 5'-triphosphate. In Sulfurimonas denitrificans (strain ATCC 33889 / DSM 1251) (Thiomicrospira denitrificans (strain ATCC 33889 / DSM 1251)), this protein is GTP 3',8-cyclase.